Reading from the N-terminus, the 316-residue chain is 2,3-dihydroxyphenylpropionate/2,3-dihydroxicinnamic acid 1,2-dioxygenase (316 aa).

H118 acts as the Proton donor in catalysis. H182 (proton acceptor) is an active-site residue.

The protein belongs to the LigB/MhpB extradiol dioxygenase family. As to quaternary structure, homotetramer. Fe(2+) is required as a cofactor.

The enzyme catalyses 3-(2,3-dihydroxyphenyl)propanoate + O2 = (2Z,4E)-2-hydroxy-6-oxonona-2,4-dienedioate + H(+). It catalyses the reaction (2E)-3-(2,3-dihydroxyphenyl)prop-2-enoate + O2 = (2Z,4E,7E)-2-hydroxy-6-oxonona-2,4,7-trienedioate + H(+). The protein operates within aromatic compound metabolism; 3-phenylpropanoate degradation. Its function is as follows. Catalyzes the non-heme iron(II)-dependent oxidative cleavage of 2,3-dihydroxyphenylpropionic acid and 2,3-dihydroxicinnamic acid into 2-hydroxy-6-ketononadienedioate and 2-hydroxy-6-ketononatrienedioate, respectively. The polypeptide is 2,3-dihydroxyphenylpropionate/2,3-dihydroxicinnamic acid 1,2-dioxygenase (Mycolicibacterium vanbaalenii (strain DSM 7251 / JCM 13017 / BCRC 16820 / KCTC 9966 / NRRL B-24157 / PYR-1) (Mycobacterium vanbaalenii)).